A 311-amino-acid chain; its full sequence is Ribosomal RNA small subunit methyltransferase H (311 aa).

Residues 32–34, D52, F79, D100, and Q107 contribute to the S-adenosyl-L-methionine site; that span reads AGH.

This sequence belongs to the methyltransferase superfamily. RsmH family.

It is found in the cytoplasm. The enzyme catalyses cytidine(1402) in 16S rRNA + S-adenosyl-L-methionine = N(4)-methylcytidine(1402) in 16S rRNA + S-adenosyl-L-homocysteine + H(+). Specifically methylates the N4 position of cytidine in position 1402 (C1402) of 16S rRNA. In Staphylococcus aureus (strain COL), this protein is Ribosomal RNA small subunit methyltransferase H.